Reading from the N-terminus, the 245-residue chain is Leucyl/phenylalanyl-tRNA--protein transferase (245 aa).

The protein belongs to the L/F-transferase family.

It localises to the cytoplasm. It carries out the reaction N-terminal L-lysyl-[protein] + L-leucyl-tRNA(Leu) = N-terminal L-leucyl-L-lysyl-[protein] + tRNA(Leu) + H(+). The catalysed reaction is N-terminal L-arginyl-[protein] + L-leucyl-tRNA(Leu) = N-terminal L-leucyl-L-arginyl-[protein] + tRNA(Leu) + H(+). It catalyses the reaction L-phenylalanyl-tRNA(Phe) + an N-terminal L-alpha-aminoacyl-[protein] = an N-terminal L-phenylalanyl-L-alpha-aminoacyl-[protein] + tRNA(Phe). Functions in the N-end rule pathway of protein degradation where it conjugates Leu, Phe and, less efficiently, Met from aminoacyl-tRNAs to the N-termini of proteins containing an N-terminal arginine or lysine. The protein is Leucyl/phenylalanyl-tRNA--protein transferase of Paraburkholderia phymatum (strain DSM 17167 / CIP 108236 / LMG 21445 / STM815) (Burkholderia phymatum).